We begin with the raw amino-acid sequence, 453 residues long: Retroviral integration site protein Fli-1 homolog (453 aa).

The PNT domain maps to 111 to 197 (PPPPNMTTNE…SHLNYLRDSS (87 aa)). A compositionally biased stretch (polar residues) spans 201-214 (GYNTQAHTDQSSRL). The segment at 201–273 (GYNTQAHTDQ…YQILGPTSSR (73 aa)) is disordered. The span at 215 to 226 (TAKEDPSYEAVR) shows a compositional bias: basic and acidic residues. Composition is skewed to polar residues over residues 230–239 (WGNSMSSPVT) and 246–273 (GTQNVNKSGDQQRSQPDPYQILGPTSSR). The ETS DNA-binding region spans 282 to 362 (IQLWQFLLEL…HGKRYAYKFD (81 aa)).

The protein belongs to the ETS family.

The protein resides in the nucleus. The chain is Retroviral integration site protein Fli-1 homolog (fli1) from Xenopus laevis (African clawed frog).